The sequence spans 518 residues: Bifunctional methyltransferase (518 aa).

The tract at residues 1–300 (MQYSIKQILS…SHNRVIEISP (300 aa)) is hemK. The tract at residues 1 to 302 (MQYSIKQILS…NRVIEISPIN (302 aa)) is RF MTase. S-adenosyl-L-methionine contacts are provided by residues 140–144 (GTGSG), aspartate 163, tryptophan 192, asparagine 207, glutamate 347, glutamate 372, asparagine 399, and aspartate 421. 207 to 210 (NPPY) lines the substrate pocket. The tRNA (guanine-N(7)-)-methyltransferase stretch occupies residues 301–518 (INLNRSYARR…MILQHALTDH (218 aa)). The segment at 305-518 (RSYARRIGKS…MILQHALTDH (214 aa)) is tRNA MTase. Aspartate 421 is a catalytic residue. 2 residues coordinate substrate: lysine 425 and aspartate 457.

It in the C-terminal section; belongs to the class I-like SAM-binding methyltransferase superfamily. TrmB family. This sequence in the N-terminal section; belongs to the protein N5-glutamine methyltransferase family. PrmC subfamily.

It catalyses the reaction L-glutaminyl-[peptide chain release factor] + S-adenosyl-L-methionine = N(5)-methyl-L-glutaminyl-[peptide chain release factor] + S-adenosyl-L-homocysteine + H(+). It carries out the reaction guanosine(46) in tRNA + S-adenosyl-L-methionine = N(7)-methylguanosine(46) in tRNA + S-adenosyl-L-homocysteine. Methylates the class 1 translation termination release factors RF1/PrfA and RF2/PrfB on the glutamine residue of the universally conserved GGQ motif. Functionally, catalyzes the formation of N(7)-methylguanine at position 46 (m7G46) in tRNA. The protein is Bifunctional methyltransferase (prmC/trmB) of Rickettsia prowazekii (strain Madrid E).